Consider the following 122-residue polypeptide: Large ribosomal subunit protein uL14 (122 aa).

It belongs to the universal ribosomal protein uL14 family. In terms of assembly, part of the 50S ribosomal subunit. Forms a cluster with proteins L3 and L19. In the 70S ribosome, L14 and L19 interact and together make contacts with the 16S rRNA in bridges B5 and B8.

Functionally, binds to 23S rRNA. Forms part of two intersubunit bridges in the 70S ribosome. This Paenarthrobacter aurescens (strain TC1) protein is Large ribosomal subunit protein uL14.